The primary structure comprises 513 residues: Maturase K (513 aa).

Belongs to the intron maturase 2 family. MatK subfamily.

It localises to the plastid. It is found in the chloroplast. In terms of biological role, usually encoded in the trnK tRNA gene intron. Probably assists in splicing its own and other chloroplast group II introns. The sequence is that of Maturase K from Cynodon dactylon (Bermuda grass).